Consider the following 416-residue polypeptide: Gamma-glutamyl phosphate reductase (416 aa).

The protein belongs to the gamma-glutamyl phosphate reductase family.

It is found in the cytoplasm. It carries out the reaction L-glutamate 5-semialdehyde + phosphate + NADP(+) = L-glutamyl 5-phosphate + NADPH + H(+). It participates in amino-acid biosynthesis; L-proline biosynthesis; L-glutamate 5-semialdehyde from L-glutamate: step 2/2. Catalyzes the NADPH-dependent reduction of L-glutamate 5-phosphate into L-glutamate 5-semialdehyde and phosphate. The product spontaneously undergoes cyclization to form 1-pyrroline-5-carboxylate. This Leptospira borgpetersenii serovar Hardjo-bovis (strain JB197) protein is Gamma-glutamyl phosphate reductase.